Here is a 193-residue protein sequence, read N- to C-terminus: Thioredoxin reductase-like selenoprotein T1a (193 aa).

The N-terminal stretch at 1-21 is a signal peptide; it reads MRWLPFSALLLWALCLHSASA. The cysteinyl-selenocysteine (Cys-Sec) cross-link spans 44–47; the sequence is CVSU. Position 47 (Sec47) is a non-standard amino acid, selenocysteine. Residues 83–101 form a helical membrane-spanning segment; sequence IASFLSMFKLLLIGVIILG.

It belongs to the SelWTH family. Selenoprotein T subfamily. May contain a selenide-sulfide bond between Cys-44 and Sec-47. This bond is speculated to serve as redox-active pair. As to expression, expressed in embryonic olfactory vesicles and the photoreceptor cell layer of the embryonic retina. Low level in embryonic epiphysis.

Its subcellular location is the endoplasmic reticulum membrane. It carries out the reaction [thioredoxin]-dithiol + NADP(+) = [thioredoxin]-disulfide + NADPH + H(+). Functionally, selenoprotein with thioredoxin reductase-like oxidoreductase activity. This chain is Thioredoxin reductase-like selenoprotein T1a, found in Danio rerio (Zebrafish).